A 295-amino-acid polypeptide reads, in one-letter code: 4-hydroxy-tetrahydrodipicolinate synthase (295 aa).

Position 47 (Thr47) interacts with pyruvate. Tyr135 functions as the Proton donor/acceptor in the catalytic mechanism. Lys163 serves as the catalytic Schiff-base intermediate with substrate. Ile204 is a pyruvate binding site.

The protein belongs to the DapA family. Homotetramer; dimer of dimers.

It is found in the cytoplasm. It catalyses the reaction L-aspartate 4-semialdehyde + pyruvate = (2S,4S)-4-hydroxy-2,3,4,5-tetrahydrodipicolinate + H2O + H(+). The protein operates within amino-acid biosynthesis; L-lysine biosynthesis via DAP pathway; (S)-tetrahydrodipicolinate from L-aspartate: step 3/4. In terms of biological role, catalyzes the condensation of (S)-aspartate-beta-semialdehyde [(S)-ASA] and pyruvate to 4-hydroxy-tetrahydrodipicolinate (HTPA). This chain is 4-hydroxy-tetrahydrodipicolinate synthase, found in Caldicellulosiruptor bescii (strain ATCC BAA-1888 / DSM 6725 / KCTC 15123 / Z-1320) (Anaerocellum thermophilum).